The following is a 191-amino-acid chain: Putative acetyltransferase DDB_G0280825 (191 aa).

It belongs to the transferase hexapeptide repeat family.

The polypeptide is Putative acetyltransferase DDB_G0280825 (Dictyostelium discoideum (Social amoeba)).